The following is a 397-amino-acid chain: F-box protein At3g49450 (397 aa).

In terms of domain architecture, F-box spans 26 to 75; sequence GENSGTLPTDLMVEILSRVPAKSAARFRCVSNDWNSLLRSPYLTNLFLKR.

The chain is F-box protein At3g49450 from Arabidopsis thaliana (Mouse-ear cress).